The chain runs to 279 residues: HTH-type transcriptional activator RhaS (279 aa).

Residues Gln-175–Gln-273 form the HTH araC/xylS-type domain. 2 DNA-binding regions (H-T-H motif) span residues Gly-192 to Thr-213 and Ile-240 to Phe-263.

Binds DNA as a dimer.

It localises to the cytoplasm. In terms of biological role, activates expression of the rhaBAD and rhaT operons. This is HTH-type transcriptional activator RhaS from Pectobacterium atrosepticum (strain SCRI 1043 / ATCC BAA-672) (Erwinia carotovora subsp. atroseptica).